Consider the following 180-residue polypeptide: Large ribosomal subunit protein uL6 (180 aa).

This sequence belongs to the universal ribosomal protein uL6 family. In terms of assembly, part of the 50S ribosomal subunit.

Its function is as follows. This protein binds to the 23S rRNA, and is important in its secondary structure. It is located near the subunit interface in the base of the L7/L12 stalk, and near the tRNA binding site of the peptidyltransferase center. This is Large ribosomal subunit protein uL6 from Protochlamydia amoebophila (strain UWE25).